We begin with the raw amino-acid sequence, 246 residues long: Probable transcriptional regulatory protein YebC (246 aa).

The tract at residues 1–20 is disordered; the sequence is MAGHSKWANTRHRKAAQDAK.

Belongs to the TACO1 family.

It localises to the cytoplasm. This Salmonella choleraesuis (strain SC-B67) protein is Probable transcriptional regulatory protein YebC.